The following is a 60-amino-acid chain: Large ribosomal subunit protein uL30 (60 aa).

The protein belongs to the universal ribosomal protein uL30 family. As to quaternary structure, part of the 50S ribosomal subunit.

This is Large ribosomal subunit protein uL30 from Streptococcus pneumoniae (strain Hungary19A-6).